Reading from the N-terminus, the 146-residue chain is Hemoglobin subunit beta (146 aa).

The 145-residue stretch at 2 to 146 folds into the Globin domain; that stretch reads FLTAEEKGLV…VANALAHKYH (145 aa). Ser-44 bears the Phosphoserine mark. Lys-59 is subject to N6-acetyllysine. A heme b-binding site is contributed by His-63. Lys-82 is subject to N6-acetyllysine. His-92 contacts heme b. Cys-93 bears the S-nitrosocysteine mark. Residue Lys-144 is modified to N6-acetyllysine.

It belongs to the globin family. As to quaternary structure, heterotetramer of two alpha chains and two beta chains. Red blood cells.

In terms of biological role, involved in oxygen transport from the lung to the various peripheral tissues. In Lynx lynx (Eurasian lynx), this protein is Hemoglobin subunit beta (HBB).